The sequence spans 45 residues: Parabutoporin (45 aa).

Monomer and homodimer. In terms of tissue distribution, expressed by the venom gland.

Its subcellular location is the secreted. It localises to the target cell membrane. Functionally, at high concentrations, acts as a pore former in cellular membranes and causes the leakage of the cells. At submicromolar concentrations, degranulates granulocytes and has a weak hemolytic activity against human red blood cells. Also strongly inhibits the production of superoxide anions. Has a strong antibacterial activity against Gram-negative bacteria but is less active against Gram-positive bacteria. Also has antifungal activity. Induces reversible G-protein dependent Ca(2+) release from intracellular stores and increase Ca(2+) influx in HL-60 cells. Induces the activation of the Rac pathway in granulocytes. Synergistically enhances the excitatory effects of short and long chain ion-channel-specific neurotoxins by interaction with the neuronal membranes. This Parabuthus schlechteri (Scorpion) protein is Parabutoporin.